We begin with the raw amino-acid sequence, 338 residues long: MPIFTAQELAERFNLQLFGDGNLRIHGVATLTQASPEQLSFLANPRYLTQLLNSRAGVIVLHADDVKTASGTVLIAKDPYVTFAKIAALFDIKPAREAGIHPLATVDPSAHVSPTAHVGAFVSIGARSSIGASCIIGTGSIIGDDCTIDDGSELIARVTLISKVRLGKRVRIHPGAVLGGEGFGLAMENGHWIKIPQLGGVVIGDDCEIGANSCIDRGALDDTVLEEDVHIDNLVQIAHNCRIGAHTAIAGCTGIAGSAKIGRYCLLGGHVGVVGHLQICDNVVITGKSVVRNSIHTPGEYSSGTPLTDNRTWRKNAVRFKQLDMLVRRMMAVSKEKA.

Residue His239 is the Proton acceptor of the active site.

The protein belongs to the transferase hexapeptide repeat family. LpxD subfamily. In terms of assembly, homotrimer.

The catalysed reaction is a UDP-3-O-[(3R)-3-hydroxyacyl]-alpha-D-glucosamine + a (3R)-hydroxyacyl-[ACP] = a UDP-2-N,3-O-bis[(3R)-3-hydroxyacyl]-alpha-D-glucosamine + holo-[ACP] + H(+). It participates in bacterial outer membrane biogenesis; LPS lipid A biosynthesis. In terms of biological role, catalyzes the N-acylation of UDP-3-O-acylglucosamine using 3-hydroxyacyl-ACP as the acyl donor. Is involved in the biosynthesis of lipid A, a phosphorylated glycolipid that anchors the lipopolysaccharide to the outer membrane of the cell. The protein is UDP-3-O-acylglucosamine N-acyltransferase of Xylella fastidiosa (strain 9a5c).